Here is a 580-residue protein sequence, read N- to C-terminus: Arginine--tRNA ligase (580 aa).

Residues 131 to 141 carry the 'HIGH' region motif; it reads ANPTGPLHVGH.

The protein belongs to the class-I aminoacyl-tRNA synthetase family. In terms of assembly, monomer.

The protein localises to the cytoplasm. It carries out the reaction tRNA(Arg) + L-arginine + ATP = L-arginyl-tRNA(Arg) + AMP + diphosphate. This is Arginine--tRNA ligase from Ruegeria sp. (strain TM1040) (Silicibacter sp.).